A 153-amino-acid polypeptide reads, in one-letter code: Ribosome maturation factor RimP (153 aa).

Belongs to the RimP family.

The protein localises to the cytoplasm. Its function is as follows. Required for maturation of 30S ribosomal subunits. The polypeptide is Ribosome maturation factor RimP (Nostoc punctiforme (strain ATCC 29133 / PCC 73102)).